A 355-amino-acid chain; its full sequence is Chemerin-like receptor 2 (355 aa).

Topologically, residues 1-41 are extracellular; sequence MEDLEETLFEEFENYSYALDYYSLESDLEEKVQLGVVHWVS. An N-linked (GlcNAc...) asparagine glycan is attached at asparagine 14. Residues 42–62 traverse the membrane as a helical segment; sequence LVLYCLSFVLGIPGNAIVIWF. At 63 to 73 the chain is on the cytoplasmic side; that stretch reads TGFKWKRTVST. A helical transmembrane segment spans residues 74–94; sequence LWFLNLAIADFIFLLFLPLYI. The Extracellular portion of the chain corresponds to 95–112; the sequence is SYVVMNFHWPFGIWLCKA. Cysteine 110 and cysteine 187 form a disulfide bridge. A helical membrane pass occupies residues 113–133; it reads NSFTAQLNMFASVFFLTVISL. Topologically, residues 134–154 are cytoplasmic; sequence DHYIHLIHPVLSHRHRTLKNS. A helical transmembrane segment spans residues 155–175; sequence LIVIIFIWLLASLIGGPALYF. The Extracellular portion of the chain corresponds to 176-210; that stretch reads RDTVEFNNHTLCYNNFQKHDPDLTVIRHHVLTWVK. The helical transmembrane segment at 211–231 threads the bilayer; that stretch reads YIVGYLFPLLTMSICYLCLIL. Topologically, residues 232-247 are cytoplasmic; sequence KVKKRSILISSRHFWT. A helical membrane pass occupies residues 248–268; it reads ILAVVVAFVVCWTPYHLFSIW. Over 269–286 the chain is Extracellular; that stretch reads ELTIHHNSYSHHVMQAGI. Residues 287–307 traverse the membrane as a helical segment; the sequence is PLSTGLAFLNSCLNPILYVLI. The Cytoplasmic portion of the chain corresponds to 308-355; sequence SKKFQARFRSSVAEILKYTLWEVSCSGTVSEQLRNSETKNLCLLETAQ.

This sequence belongs to the chemokine-like receptor (CMKLR) family.

It localises to the cell membrane. Its function is as follows. Receptor for chemoattractant adipokine chemerin/RARRES2 suggesting a role for this receptor in the regulation of inflammation and energy homesotasis. Signals mainly via beta-arrestin pathway. Binding of RARRES2 activates weakly G proteins, calcium mobilization and MAPK1/MAPK3 (ERK1/2) phosphorylation too. Acts also as a receptor for TAFA1, mediates its effects on neuronal stem-cell proliferation and differentiation via the activation of ROCK/ERK and ROCK/STAT3 signaling pathway. This chain is Chemerin-like receptor 2 (CMKLR2), found in Macaca fascicularis (Crab-eating macaque).